Reading from the N-terminus, the 127-residue chain is Vacuolar ATPase assembly integral membrane protein VMA21 (127 aa).

The interval 1–28 is disordered; it reads MATRRNPTKESITTSPPPDQQPRQPGEL. At 1 to 45 the chain is on the cytoplasmic side; it reads MATRRNPTKESITTSPPPDQQPRQPGELEHREAIQLRDLPGYPQQ. The chain crosses the membrane as a helical span at residues 46–66; sequence VLWKLIIYSIAVLVLPLSAYF. The Lumenal segment spans residues 67–79; that stretch reads YSVNYVFDGNTTY. Residues 80 to 100 form a helical membrane-spanning segment; sequence AGATAAITANLILFSYIVVAM. The Cytoplasmic segment spans residues 101-127; sequence REDKGDQEQLREQQQLRGNKEETKKMK. The disordered stretch occupies residues 107–127; that stretch reads QEQLREQQQLRGNKEETKKMK. Basic and acidic residues predominate over residues 118–127; it reads GNKEETKKMK. Residues 124 to 127 carry the Prevents secretion from ER motif; that stretch reads KKMK.

This sequence belongs to the VMA21 family.

Its subcellular location is the endoplasmic reticulum membrane. It is found in the endoplasmic reticulum-Golgi intermediate compartment membrane. The protein localises to the cytoplasmic vesicle. The protein resides in the COPII-coated vesicle membrane. In terms of biological role, required for the assembly of the V0 complex of the vacuolar ATPase (V-ATPase) in the endoplasmic reticulum. In Coccidioides immitis (strain RS) (Valley fever fungus), this protein is Vacuolar ATPase assembly integral membrane protein VMA21.